A 380-amino-acid polypeptide reads, in one-letter code: Zinc metalloproteinase-like protein nas-21 (380 aa).

The signal sequence occupies residues 1 to 24; that stretch reads MNYFITFFFMHIAVLNFYFRFSNG. A Peptidase M12A domain is found at 46 to 234; sequence QALRMDNEPR…LMINEYYQCS (189 aa). N-linked (GlcNAc...) asparagine glycosylation occurs at asparagine 87. Intrachain disulfides connect cysteine 90-cysteine 233 and cysteine 110-cysteine 130. The active site involves glutamate 138. N-linked (GlcNAc...) asparagine glycans are attached at residues asparagine 253, asparagine 269, asparagine 283, and asparagine 304.

It is found in the secreted. Functionally, may lack metalloprotease activity. The chain is Zinc metalloproteinase-like protein nas-21 (nas-21) from Caenorhabditis elegans.